The primary structure comprises 263 residues: 4-hydroxy-tetrahydrodipicolinate reductase (263 aa).

NAD(+) is bound by residues 8 to 13 (GACGKM), D34, 97 to 99 (GTT), and 123 to 126 (APNF). The Proton donor/acceptor role is filled by H153. (S)-2,3,4,5-tetrahydrodipicolinate is bound at residue H154. K157 (proton donor) is an active-site residue. 163–164 (GT) lines the (S)-2,3,4,5-tetrahydrodipicolinate pocket.

The protein belongs to the DapB family.

Its subcellular location is the cytoplasm. The catalysed reaction is (S)-2,3,4,5-tetrahydrodipicolinate + NAD(+) + H2O = (2S,4S)-4-hydroxy-2,3,4,5-tetrahydrodipicolinate + NADH + H(+). It carries out the reaction (S)-2,3,4,5-tetrahydrodipicolinate + NADP(+) + H2O = (2S,4S)-4-hydroxy-2,3,4,5-tetrahydrodipicolinate + NADPH + H(+). The protein operates within amino-acid biosynthesis; L-lysine biosynthesis via DAP pathway; (S)-tetrahydrodipicolinate from L-aspartate: step 4/4. Its function is as follows. Catalyzes the conversion of 4-hydroxy-tetrahydrodipicolinate (HTPA) to tetrahydrodipicolinate. The sequence is that of 4-hydroxy-tetrahydrodipicolinate reductase from Carboxydothermus hydrogenoformans (strain ATCC BAA-161 / DSM 6008 / Z-2901).